We begin with the raw amino-acid sequence, 116 residues long: MINIYDSANQLAQDLTKTDQYKAVGDAVKAVQADDESAALFKKMDEIQAKIMQAQQTGKPLSDEDQKAYQELNAQVQKNDKIVALLKSEQGLYDLLGEIQKAYTKPINDLYEGLRN.

This sequence belongs to the UPF0342 family.

The chain is UPF0342 protein lhv_1666 from Lactobacillus helveticus (strain DPC 4571).